Here is a 243-residue protein sequence, read N- to C-terminus: tRNA pseudouridine synthase A (243 aa).

D51 acts as the Nucleophile in catalysis. Y111 provides a ligand contact to substrate.

It belongs to the tRNA pseudouridine synthase TruA family. Homodimer.

It carries out the reaction uridine(38/39/40) in tRNA = pseudouridine(38/39/40) in tRNA. Formation of pseudouridine at positions 38, 39 and 40 in the anticodon stem and loop of transfer RNAs. This chain is tRNA pseudouridine synthase A, found in Neorickettsia sennetsu (strain ATCC VR-367 / Miyayama) (Ehrlichia sennetsu).